Reading from the N-terminus, the 237-residue chain is Zinc finger protein 22 (237 aa).

Residues 1–33 are disordered; that stretch reads MRLGKPKGGISRSASQGKTYESKRKTARQRQKW. An N6-acetyllysine mark is found at Lys-18 and Lys-23. 5 consecutive C2H2-type zinc fingers follow at residues 55 to 82, 83 to 110, 111 to 138, 139 to 166, and 167 to 194; these read YKCTKCSKSFSQSSTLFQHKKIHTGKKS, HKCADCGKSFFQSSNLIQHRRIHTGEKP, YKCDECGERFKQSSNLIQHQRIHTGEKP, YCCDECGRCFSQSSHLIQHQRTHTGEKP, and YQCEECDKCFSQSSHLRQHMKVHKEKKS. The segment covering 188 to 217 has biased composition (basic residues); sequence VHKEKKSHKRGKNARAKTHPVSWKRGKGRK. Residues 188-218 are disordered; that stretch reads VHKEKKSHKRGKNARAKTHPVSWKRGKGRKA.

The protein belongs to the krueppel C2H2-type zinc-finger protein family. In terms of tissue distribution, highly expressed in the ameloblast layer of mandibular incisors, moderately expressed in submandibular gland, calvaria, kidney and lung, and expressed at low levels in brain and thymus.

The protein resides in the nucleus. Its function is as follows. Binds DNA through the consensus sequence 5'-CAATG-3'. May be involved in transcriptional regulation and may play a role in tooth formation. This is Zinc finger protein 22 (Znf22) from Rattus norvegicus (Rat).